The chain runs to 115 residues: Protein V2 (115 aa).

The protein belongs to the geminiviridae protein AV2/V2 family. As to quaternary structure, interacts with host SGS3.

It is found in the host cytoplasm. It localises to the host perinuclear region. Through its interaction with host SGS3, acts as a suppressor of RNA-mediated gene silencing, also known as post-transcriptional gene silencing (PTGS), a mechanism of plant viral defense that limits the accumulation of viral RNAs. The polypeptide is Protein V2 (Tomato yellow leaf curl Sardinia virus (isolate Spain-2) (TYLCSV)).